Here is a 111-residue protein sequence, read N- to C-terminus: Secreted transmembrane peptide 5 (111 aa).

The N-terminal stretch at 1-46 is a signal peptide; the sequence is MRLSVFYIFITRLAMTKNATKNEMGSKSPNIVALVLPLLLILYTLS. Positions 66 to 79 match the SCOOP motif motif; that stretch reads IVWTPHSNSCGGSP. The SxS motif essential for MIK2 binding motif lies at 72 to 74; the sequence is SNS. The segment at 89-111 is disordered; sequence TTGRPCRRSRPPGTNIPVSDQSP.

It belongs to the serine rich endogenous peptide (SCOOP) phytocytokine family. In terms of assembly, interacts with MIK2 (via extracellular leucine-rich repeat domain); this interaction triggers the formation of complex between MIK2 and the BAK1/SERK3 and SERK4 coreceptors, and subsequent BAK1 activation by phosphorylation. In terms of tissue distribution, mostly expressed in leaves, and, to a lower extent, in roots, stems, siliques, seeds and flowers.

The protein resides in the cell membrane. It localises to the secreted. The protein localises to the extracellular space. Its subcellular location is the apoplast. Brassicaceae-specific phytocytokine (plant endogenous peptide released into the apoplast) perceived by MIK2 in a BAK1/SERK3 and SERK4 coreceptors-dependent manner, that modulates various physiological and antimicrobial processes including growth prevention and reactive oxygen species (ROS) response regulation. The chain is Secreted transmembrane peptide 5 from Arabidopsis thaliana (Mouse-ear cress).